The following is a 570-amino-acid chain: Potassium-transporting ATPase potassium-binding subunit (570 aa).

11 consecutive transmembrane segments (helical) span residues 7–27, 65–85, 95–115, 135–155, 179–199, 254–274, 286–306, 383–403, 422–442, 489–509, and 528–548; these read AEIA…GVFL, AYAL…YAVL, PQGF…SFIT, LVLT…AAAL, LYLL…LGLP, LTNL…FFAF, ALVI…YATE, GVAI…LMVG, ILAV…AAVL, LGIA…AIAG, and GGLF…LQFF.

It belongs to the KdpA family. The system is composed of three essential subunits: KdpA, KdpB and KdpC.

The protein resides in the cell inner membrane. In terms of biological role, part of the high-affinity ATP-driven potassium transport (or Kdp) system, which catalyzes the hydrolysis of ATP coupled with the electrogenic transport of potassium into the cytoplasm. This subunit binds the periplasmic potassium ions and delivers the ions to the membrane domain of KdpB through an intramembrane tunnel. The polypeptide is Potassium-transporting ATPase potassium-binding subunit (Caulobacter vibrioides (strain ATCC 19089 / CIP 103742 / CB 15) (Caulobacter crescentus)).